The sequence spans 149 residues: MKIVVDADACPVKGIIERLAKEHQIEVIMFIDTSHELYSDYSKIITVSKAPDAVDFALLNQTSPNDIVVTQDYGVAAMALGKKAKALHPSGKIFTNDNINQMLFERHIAKEQRRHGKQNLHSKNNKKRTTGDDIHFESSLNELLKSISS.

Over residues 112-128 the composition is skewed to basic residues; the sequence is QRRHGKQNLHSKNNKKR. The segment at 112–132 is disordered; it reads QRRHGKQNLHSKNNKKRTTGD.

The protein belongs to the UPF0178 family.

The polypeptide is UPF0178 protein Cphy_3042 (Lachnoclostridium phytofermentans (strain ATCC 700394 / DSM 18823 / ISDg) (Clostridium phytofermentans)).